The sequence spans 374 residues: DNA replication and repair protein RecF (374 aa).

G30–T37 provides a ligand contact to ATP.

It belongs to the RecF family.

It localises to the cytoplasm. Functionally, the RecF protein is involved in DNA metabolism; it is required for DNA replication and normal SOS inducibility. RecF binds preferentially to single-stranded, linear DNA. It also seems to bind ATP. The sequence is that of DNA replication and repair protein RecF from Geobacillus sp. (strain WCH70).